The primary structure comprises 485 residues: Glutamate--tRNA ligase (485 aa).

An L-glutamate-binding site is contributed by arginine 6. The 'HIGH' region signature appears at 9 to 19 (PSPTGNLHIGT). Residues tyrosine 192 and 210–214 (RGEDH) each bind L-glutamate. The 'KMSKS' region signature appears at 248–252 (KLSKR). Lysine 251 serves as a coordination point for ATP.

This sequence belongs to the class-I aminoacyl-tRNA synthetase family. Glutamate--tRNA ligase type 1 subfamily. As to quaternary structure, monomer. Requires Does not require zinc. as cofactor.

The protein resides in the cytoplasm. The enzyme catalyses tRNA(Glu) + L-glutamate + ATP = L-glutamyl-tRNA(Glu) + AMP + diphosphate. Its function is as follows. Non-discriminating glutamyl-tRNA synthetase. Catalyzes the attachment of glutamate to tRNA(Glu) in a two-step reaction: glutamate is first activated by ATP to form Glu-AMP and then transferred to the acceptor end of tRNA(Glu). Acylates both tRNA(Glu) and tRNA(Gln) with glutamate, but has 13-fold higher efficiency with tRNA(Glu). This chain is Glutamate--tRNA ligase (gltX), found in Thermosynechococcus vestitus (strain NIES-2133 / IAM M-273 / BP-1).